A 100-amino-acid polypeptide reads, in one-letter code: NADH-quinone oxidoreductase subunit K (100 aa).

3 consecutive transmembrane segments (helical) span residues I2–I22, L29–F49, and F63–W83.

Belongs to the complex I subunit 4L family. NDH-1 is composed of 14 different subunits. Subunits NuoA, H, J, K, L, M, N constitute the membrane sector of the complex.

The protein resides in the cell inner membrane. The enzyme catalyses a quinone + NADH + 5 H(+)(in) = a quinol + NAD(+) + 4 H(+)(out). In terms of biological role, NDH-1 shuttles electrons from NADH, via FMN and iron-sulfur (Fe-S) centers, to quinones in the respiratory chain. The immediate electron acceptor for the enzyme in this species is believed to be ubiquinone. Couples the redox reaction to proton translocation (for every two electrons transferred, four hydrogen ions are translocated across the cytoplasmic membrane), and thus conserves the redox energy in a proton gradient. In Nitratiruptor sp. (strain SB155-2), this protein is NADH-quinone oxidoreductase subunit K.